Here is a 292-residue protein sequence, read N- to C-terminus: MLKRDQSEMDIEAETANMGKEEKESFVHKRQKYRQEQEEKRLAAKKGVSFEQPEDGEIKLPKKRYYRQRAHSNPFSDHQLEYPESPADMDWDVLYPNRKEGQKVEVADIGCGFGGLLVALSPQLPNQLILGMEIRVQVTNYVEDRIVALRHQNKETDGYQNISVLRGNAMKFLPNFFEKGQLSKIFFCFPDPHFKQRKHKARIVTTTLCSEYAYVVRPGGIVYTITDVKDLHEWMVKHLAAHPLFERLTKEEEDADPCVATMLVETEEGKKVARNEGDKFVACFRRKENPEW.

The disordered stretch occupies residues 1–54 (MLKRDQSEMDIEAETANMGKEEKESFVHKRQKYRQEQEEKRLAAKKGVSFEQPE). A compositionally biased stretch (basic and acidic residues) spans 19 to 42 (GKEEKESFVHKRQKYRQEQEEKRL). S-adenosyl-L-methionine is bound by residues Gly-110, 133-134 (EI), 168-169 (NA), and Cys-188. The active site involves Asp-191. 266–268 (TEE) provides a ligand contact to S-adenosyl-L-methionine.

Belongs to the class I-like SAM-binding methyltransferase superfamily. TrmB family. Forms a complex with TRM82.

The protein localises to the nucleus. The enzyme catalyses guanosine(46) in tRNA + S-adenosyl-L-methionine = N(7)-methylguanosine(46) in tRNA + S-adenosyl-L-homocysteine. It functions in the pathway tRNA modification; N(7)-methylguanine-tRNA biosynthesis. Functionally, catalyzes the formation of N(7)-methylguanine at position 46 (m7G46) in tRNA. In Yarrowia lipolytica (strain CLIB 122 / E 150) (Yeast), this protein is tRNA (guanine-N(7)-)-methyltransferase.